A 170-amino-acid polypeptide reads, in one-letter code: Small ribosomal subunit protein bS16 (170 aa).

Residues 109-170 are disordered; it reads ALAEAEGGPS…AAESEAPAAE (62 aa). Positions 131–150 are enriched in basic and acidic residues; it reads AKKDEQPTEKAAEPAAEKAA. The segment covering 151–170 has biased composition (low complexity); it reads EPAAEAPAEAAAESEAPAAE.

Belongs to the bacterial ribosomal protein bS16 family.

The protein is Small ribosomal subunit protein bS16 of Mycolicibacterium gilvum (strain PYR-GCK) (Mycobacterium gilvum (strain PYR-GCK)).